The following is a 151-amino-acid chain: 3-hydroxyacyl-[acyl-carrier-protein] dehydratase FabZ (151 aa).

The active site involves histidine 54.

It belongs to the thioester dehydratase family. FabZ subfamily.

It is found in the cytoplasm. It catalyses the reaction a (3R)-hydroxyacyl-[ACP] = a (2E)-enoyl-[ACP] + H2O. Functionally, involved in unsaturated fatty acids biosynthesis. Catalyzes the dehydration of short chain beta-hydroxyacyl-ACPs and long chain saturated and unsaturated beta-hydroxyacyl-ACPs. This Pectobacterium atrosepticum (strain SCRI 1043 / ATCC BAA-672) (Erwinia carotovora subsp. atroseptica) protein is 3-hydroxyacyl-[acyl-carrier-protein] dehydratase FabZ.